A 947-amino-acid polypeptide reads, in one-letter code: Regulator of spindle assembly protein 2 (947 aa).

2 disordered regions span residues 20-148 (EKPA…LSEQ) and 173-211 (SPHE…LKPR). 2 stretches are compositionally biased toward basic and acidic residues: residues 30 to 50 (PKYR…EGEK) and 62 to 84 (TRED…DLRI). Polar residues-rich tracts occupy residues 90-102 (SATP…SDQY) and 179-188 (QQTIQESSEQ). The stretch at 276 to 320 (IIAEEAKKRRNEAEAVRKLIEVETQNAKKRAVIQELKDRIDKLTQ) forms a coiled coil. Disordered regions lie at residues 407–453 (KINP…RRIG), 575–594 (ERES…LEIP), 600–662 (SVTT…GLII), and 681–705 (EQSL…FLLD). Low complexity predominate over residues 411–422 (SSQLNQQSSSDA). Residues 430 to 449 (EASTQMTSRLAESAMTQTSP) show a composition bias toward polar residues. A coiled-coil region spans residues 563–591 (AGLSHYLEQVKKERESMEAQESESESMEL). Positions 580–590 (EAQESESESME) are enriched in acidic residues. The span at 645 to 657 (FEHEIEEHKEPEK) shows a compositional bias: basic and acidic residues.

Interacts with phosphatase regulatory subunit rsa-1 and tpxl-1. May interact with spd-5. May interact with sys-1.

The protein resides in the cytoplasm. The protein localises to the cytoskeleton. Its subcellular location is the microtubule organizing center. It is found in the centrosome. Functionally, recruits rsa-1 and, thereby, phosphatase let-92/paa-1 complex to the centrosomes. Recruits sys-1/beta-catenin to mitotic centrosomes during the first embryonic cell divisions. This is Regulator of spindle assembly protein 2 from Caenorhabditis elegans.